The sequence spans 916 residues: Translation initiation factor IF-2 (916 aa).

The segment at 50 to 326 is disordered; the sequence is NRDKESTSQP…NSTLQQGFNK (277 aa). A compositionally biased stretch (basic and acidic residues) spans 109–241; the sequence is AQREAEEKAR…LAEENAEKWT (133 aa). Over residues 277–291 the composition is skewed to basic residues; the sequence is GRGRAAKAPRPKKNN. Over residues 292–304 the composition is skewed to basic and acidic residues; the sequence is RHSEKADREEARA. Residues 415 to 584 enclose the tr-type G domain; the sequence is SRAPVVTIMG…LLQAEVLELK (170 aa). A G1 region spans residues 424-431; it reads GHVDHGKT. GTP is bound at residue 424 to 431; that stretch reads GHVDHGKT. Residues 449 to 453 are G2; that stretch reads GITQH. The tract at residues 470 to 473 is G3; it reads DTPG. Residues 470-474 and 524-527 contribute to the GTP site; these read DTPGH and NKID. A G4 region spans residues 524 to 527; the sequence is NKID. The interval 560-562 is G5; it reads SAK.

This sequence belongs to the TRAFAC class translation factor GTPase superfamily. Classic translation factor GTPase family. IF-2 subfamily.

It is found in the cytoplasm. Its function is as follows. One of the essential components for the initiation of protein synthesis. Protects formylmethionyl-tRNA from spontaneous hydrolysis and promotes its binding to the 30S ribosomal subunits. Also involved in the hydrolysis of GTP during the formation of the 70S ribosomal complex. The protein is Translation initiation factor IF-2 of Proteus mirabilis (strain HI4320).